Here is a 594-residue protein sequence, read N- to C-terminus: ATP-dependent RNA helicase DBP9 (594 aa).

A Q motif motif is present at residues 15-43; that stretch reads SSFDSFHLDSRLSQAIRSIGFKHPTLIQS. Positions 47-229 constitute a Helicase ATP-binding domain; it reads PLALQEKRDI…QQFCRSPAIL (183 aa). 60–67 lines the ATP pocket; the sequence is ASTGSGKT. Residues 175–178 carry the DEAD box motif; the sequence is DEVD. Residues 242 to 474 form the Helicase C-terminal domain; it reads KLIQYYVKVG…PYNFDIKQVE (233 aa). The segment at 562–594 is disordered; that stretch reads PFHKNSHRKNGRVVKKKGNVQRKGKSDPLKSFK. Over residues 565–584 the composition is skewed to basic residues; it reads KNSHRKNGRVVKKKGNVQRK. Basic and acidic residues predominate over residues 585 to 594; that stretch reads GKSDPLKSFK.

Belongs to the DEAD box helicase family. DDX56/DBP9 subfamily.

The protein resides in the nucleus. The protein localises to the nucleolus. The enzyme catalyses ATP + H2O = ADP + phosphate + H(+). ATP-binding RNA helicase involved in the biogenesis of 60S ribosomal subunits and is required for the normal formation of 25S and 5.8S rRNAs. This chain is ATP-dependent RNA helicase DBP9 (DBP9), found in Kluyveromyces lactis (strain ATCC 8585 / CBS 2359 / DSM 70799 / NBRC 1267 / NRRL Y-1140 / WM37) (Yeast).